The primary structure comprises 1230 residues: Basic-leucine zipper transcription factor A (1230 aa).

4 disordered regions span residues 65-108 (LYLS…NIIN), 180-233 (LNGN…QQHQ), 270-310 (QQLK…PSTQ), and 422-578 (HQQN…RKKD). 5 stretches are compositionally biased toward low complexity: residues 69–108 (NSSNNTNNNNNNNNNNNNNNNNNNNNNNNNNNNNNNNIIN), 192–233 (NNFS…QQHQ), 270–287 (QQLKQQQPQQHPIQSPQP), 295–310 (PSLQQHQTYSYTPSTQ), and 422–447 (HQQNIQQHQNQNQQQLQLPQPQQQQH). 2 stretches are compositionally biased toward polar residues: residues 448 to 458 (KSTPPTQNTPP) and 466 to 475 (TPTLTTNGKG). The span at 476-503 (SKSTPPTTTTTTTTTTSSSSSSSSSSSS) shows a compositional bias: low complexity. The span at 523–537 (PHHHHHHHNNHHHHH) shows a compositional bias: basic residues. Over residues 541-554 (FSDENDEEFIDENE) the composition is skewed to acidic residues. The bZIP domain occupies 555–618 (DKSKNKSRSS…LGDVMRPDFD (64 aa)). A basic motif region spans residues 556 to 586 (KSKNKSRSSQNIASRNYRQRKKDHISEVEFK). Positions 562–571 (RSSQNIASRN) are enriched in polar residues. The leucine-zipper stretch occupies residues 590 to 604 (LSLENERLKQENHLL). Residues 728-753 (LKIDMELRTERDQLDREIKELFLKKI) are a coiled coil. 2 disordered regions span residues 772 to 869 (TFNS…EHNK) and 1025 to 1230 (NYTN…TPNI). Low complexity-rich tracts occupy residues 774 to 803 (NSESDYPSSPSSASNSSNSPPTSSPTIITP) and 810 to 831 (NNQNNQNNNQMINSNSNNSNNN). Basic residues predominate over residues 832 to 845 (SHHHHHHHHSHLHG). The segment covering 1025-1042 (NYTNSPLITSSPSQLTPN) has biased composition (polar residues). 2 stretches are compositionally biased toward low complexity: residues 1052–1146 (NNNN…NNGN) and 1153–1193 (QALH…SPSS).

This sequence belongs to the bZIP family. Binds DNA as a dimer. Heterodimerizes with dimB; in vitro. Also able to form homodimer; in vitro.

Its subcellular location is the nucleus. Transcriptional regulator involved in DIF-1 signaling. DIF-1 (Differentiation Inducing Factor-1) is a signal molecule involved in the differentiation of pstO (prestalk-O) cells. Functions both as an activator of prestalk gene expression and a repressor of prespore gene expression. This Dictyostelium discoideum (Social amoeba) protein is Basic-leucine zipper transcription factor A (dimA).